The primary structure comprises 122 residues: Fluoride-specific ion channel FluC (122 aa).

A run of 4 helical transmembrane segments spans residues 6 to 26 (LVVG…INLV), 33 to 53 (SISL…GLLF), 60 to 80 (GLSP…FTTF), and 101 to 121 (LNII…FIIF). Residues G75 and T78 each coordinate Na(+).

This sequence belongs to the fluoride channel Fluc/FEX (TC 1.A.43) family.

It is found in the cell inner membrane. It carries out the reaction fluoride(in) = fluoride(out). Its activity is regulated as follows. Na(+) is not transported, but it plays an essential structural role and its presence is essential for fluoride channel function. Its function is as follows. Fluoride-specific ion channel. Important for reducing fluoride concentration in the cell, thus reducing its toxicity. This Campylobacter jejuni subsp. jejuni serotype O:6 (strain 81116 / NCTC 11828) protein is Fluoride-specific ion channel FluC.